Reading from the N-terminus, the 226-residue chain is Ribose-5-phosphate isomerase A (226 aa).

Residues 33 to 36, 86 to 89, and 99 to 102 contribute to the substrate site; these read TGST, DGAD, and KGGG. Catalysis depends on E108, which acts as the Proton acceptor. K126 contacts substrate.

Belongs to the ribose 5-phosphate isomerase family. As to quaternary structure, homodimer.

It catalyses the reaction aldehydo-D-ribose 5-phosphate = D-ribulose 5-phosphate. The protein operates within carbohydrate degradation; pentose phosphate pathway; D-ribose 5-phosphate from D-ribulose 5-phosphate (non-oxidative stage): step 1/1. In terms of biological role, catalyzes the reversible conversion of ribose-5-phosphate to ribulose 5-phosphate. In Bordetella pertussis (strain Tohama I / ATCC BAA-589 / NCTC 13251), this protein is Ribose-5-phosphate isomerase A.